Reading from the N-terminus, the 287-residue chain is ATP synthase gamma chain (287 aa).

The protein belongs to the ATPase gamma chain family. In terms of assembly, F-type ATPases have 2 components, CF(1) - the catalytic core - and CF(0) - the membrane proton channel. CF(1) has five subunits: alpha(3), beta(3), gamma(1), delta(1), epsilon(1). CF(0) has three main subunits: a, b and c.

Its subcellular location is the cell inner membrane. Its function is as follows. Produces ATP from ADP in the presence of a proton gradient across the membrane. The gamma chain is believed to be important in regulating ATPase activity and the flow of protons through the CF(0) complex. The polypeptide is ATP synthase gamma chain (Baumannia cicadellinicola subsp. Homalodisca coagulata).